A 246-amino-acid chain; its full sequence is tRNA (guanine-N(1)-)-methyltransferase (246 aa).

Residues glycine 112 and 131–136 (IGDYVL) each bind S-adenosyl-L-methionine.

Belongs to the RNA methyltransferase TrmD family. As to quaternary structure, homodimer.

It localises to the cytoplasm. It carries out the reaction guanosine(37) in tRNA + S-adenosyl-L-methionine = N(1)-methylguanosine(37) in tRNA + S-adenosyl-L-homocysteine + H(+). Functionally, specifically methylates guanosine-37 in various tRNAs. This Fervidobacterium nodosum (strain ATCC 35602 / DSM 5306 / Rt17-B1) protein is tRNA (guanine-N(1)-)-methyltransferase.